We begin with the raw amino-acid sequence, 380 residues long: MAPTIRKSHPLLKIINVSFIDLPTPTNISSWWNFGSLLPVCLIAQIATGLFLAMHYTADTSLAFSSVAHICRDVNNGWLLRNLHANGASFFFICIYFHIGRGLYYGSYLYKETWNIGVILLLLVMATAFVGYVLPWGQMSFWGATVITNLLSAAPYIGSDLVQWIWGGFSVDNATLTRFFTFDFILLFIIAATSLIHLLFLHQTGSSNPTGLNSNLDKVSFHPYFSFKDLLGFIILLGALAILSTFAPNLLGDPDNFTPATPLSTPPHIKPEWYLLFAYAILRSILNKLGGVLALLLSIMVLFLMPITHTSKLRSLMFRPTAKAFFWALIANTIILTWIGGQPVEDPFISIGQIASGLYFLIFVLIIPTLGLLENKLLKI.

A run of 4 helical transmembrane segments spans residues 34–54, 78–99, 114–134, and 179–199; these read FGSL…FLAM, WLLR…YFHI, WNIG…GYVL, and FFTF…IHLL. Residues His84 and His98 each contribute to the heme b site. A heme b-binding site is contributed by His197. His202 contributes to the a ubiquinone binding site. 4 helical membrane passes run 227 to 247, 289 to 309, 321 to 341, and 348 to 368; these read FKDL…STFA, LGGV…PITH, TAKA…WIGG, and FISI…LIIP.

This sequence belongs to the cytochrome b family. In terms of assembly, the cytochrome bc1 complex contains 3 respiratory subunits (MT-CYB, CYC1 and UQCRFS1), 2 core proteins (UQCRC1 and UQCRC2) and probably 6 low-molecular weight proteins. Requires heme b as cofactor.

It localises to the mitochondrion inner membrane. Its function is as follows. Component of the ubiquinol-cytochrome c reductase complex (complex III or cytochrome b-c1 complex) that is part of the mitochondrial respiratory chain. The b-c1 complex mediates electron transfer from ubiquinol to cytochrome c. Contributes to the generation of a proton gradient across the mitochondrial membrane that is then used for ATP synthesis. The chain is Cytochrome b (mt-cyb) from Glandirana rugosa (Japanese wrinkled frog).